The following is a 641-amino-acid chain: Glycerol metabolism operon regulatory protein (641 aa).

Residues 1–318 form a sensor domain region; it reads MTTHTQDIGK…MRQLMTSQLG (318 aa). Positions 52-189 constitute a GAF domain; the sequence is ALLTIAQAAL…AIAREVGNSL (138 aa). Residues 203–265 form the PAS domain; the sequence is NQMYGLLESM…MLLRRAIKHA (63 aa). A Sigma-54 factor interaction domain is found at 327–552; the sequence is MSTDDPETRR…LNSIIENIAI (226 aa). Residues 355-362 and 415-424 contribute to the ATP site; these read GEEGVGKE and ANGGTLFLEK.

Transcriptional activator of the glycerol utilization dha operon. The sequence is that of Glycerol metabolism operon regulatory protein from Citrobacter freundii.